Consider the following 189-residue polypeptide: Large ribosomal subunit protein eL18 (189 aa).

It belongs to the eukaryotic ribosomal protein eL18 family.

It localises to the cytoplasm. The protein is Large ribosomal subunit protein eL18 (RpL18) of Anopheles gambiae (African malaria mosquito).